A 360-amino-acid polypeptide reads, in one-letter code: UDP-3-O-acylglucosamine N-acyltransferase (360 aa).

The active-site Proton acceptor is H248.

This sequence belongs to the transferase hexapeptide repeat family. LpxD subfamily. In terms of assembly, homotrimer.

It carries out the reaction a UDP-3-O-[(3R)-3-hydroxyacyl]-alpha-D-glucosamine + a (3R)-hydroxyacyl-[ACP] = a UDP-2-N,3-O-bis[(3R)-3-hydroxyacyl]-alpha-D-glucosamine + holo-[ACP] + H(+). Its pathway is bacterial outer membrane biogenesis; LPS lipid A biosynthesis. Catalyzes the N-acylation of UDP-3-O-acylglucosamine using 3-hydroxyacyl-ACP as the acyl donor. Is involved in the biosynthesis of lipid A, a phosphorylated glycolipid that anchors the lipopolysaccharide to the outer membrane of the cell. The polypeptide is UDP-3-O-acylglucosamine N-acyltransferase (Chlamydia pneumoniae (Chlamydophila pneumoniae)).